We begin with the raw amino-acid sequence, 207 residues long: Outer-membrane lipoprotein carrier protein (207 aa).

The first 21 residues, 1–21 (MRAIRMLLVSALALGTVTAYA), serve as a signal peptide directing secretion.

It belongs to the LolA family. As to quaternary structure, monomer.

Its subcellular location is the periplasm. Its function is as follows. Participates in the translocation of lipoproteins from the inner membrane to the outer membrane. Only forms a complex with a lipoprotein if the residue after the N-terminal Cys is not an aspartate (The Asp acts as a targeting signal to indicate that the lipoprotein should stay in the inner membrane). The polypeptide is Outer-membrane lipoprotein carrier protein (Pseudomonas putida (strain GB-1)).